Reading from the N-terminus, the 117-residue chain is LIM and senescent cell antigen-like-containing domain protein 3 (117 aa).

Positions 70 to 117 (ATCERCKGGFAPAETIVNSNGELYHEQCFVCAQCFQQFPEGLFYEERT) constitute an LIM zinc-binding domain.

As to expression, detected in testis.

It localises to the cytoplasm. In Homo sapiens (Human), this protein is LIM and senescent cell antigen-like-containing domain protein 3 (LIMS3).